The following is a 667-amino-acid chain: Single-minded homolog 2 (667 aa).

Residues 1–53 form the bHLH domain; it reads MKEKSKNAAKTRREKENGEFYELAKLLPLPSAITSQLDKASIIRLTTSYLKMR. PAS domains lie at 77-149 and 218-288; these read AKEL…LHHH and PPSA…LVKG. A PAC domain is found at 292 to 335; sequence TKYYRLLSKRGGWVWVQSYATVVHNSRSSRPHCIVSVNYVLTEI. The region spanning 336–667 is the Single-minded C-terminal domain; sequence EYKELQLSLE…GASVIITNGR (332 aa). Disordered stretches follow at residues 356 to 389, 409 to 428, and 500 to 520; these read WRTA…YPPQ, ASPP…SESS, and SSSS…RHSL. The Nuclear localization signal signature appears at 367 to 386; that stretch reads RKLVKPKNTKMKTKLRTNPY. A compositionally biased stretch (basic residues) spans 369 to 381; sequence LVKPKNTKMKTKL. Low complexity predominate over residues 409-419; that stretch reads ASPPASAAAPP.

As to quaternary structure, efficient DNA binding requires dimerization with another bHLH protein. Heterodimer of SIM2 and ARNT.

The protein resides in the nucleus. In terms of biological role, transcription factor that may be a master gene of CNS development in cooperation with Arnt. It may have pleiotropic effects in the tissues expressed during development. The protein is Single-minded homolog 2 (SIM2) of Homo sapiens (Human).